A 245-amino-acid polypeptide reads, in one-letter code: 1-(5-phosphoribosyl)-5-[(5-phosphoribosylamino)methylideneamino] imidazole-4-carboxamide isomerase (245 aa).

Catalysis depends on D7, which acts as the Proton acceptor. Residue D129 is the Proton donor of the active site.

This sequence belongs to the HisA/HisF family.

It is found in the cytoplasm. It carries out the reaction 1-(5-phospho-beta-D-ribosyl)-5-[(5-phospho-beta-D-ribosylamino)methylideneamino]imidazole-4-carboxamide = 5-[(5-phospho-1-deoxy-D-ribulos-1-ylimino)methylamino]-1-(5-phospho-beta-D-ribosyl)imidazole-4-carboxamide. Its pathway is amino-acid biosynthesis; L-histidine biosynthesis; L-histidine from 5-phospho-alpha-D-ribose 1-diphosphate: step 4/9. The chain is 1-(5-phosphoribosyl)-5-[(5-phosphoribosylamino)methylideneamino] imidazole-4-carboxamide isomerase from Proteus mirabilis (strain HI4320).